A 522-amino-acid polypeptide reads, in one-letter code: MSEILEDAIKSKAWPFEEAKKILDSLNGKTPEKGYVLFETGYGPSGLPHIGTFGENARMVMVQKAFEQLSNIKTKLICFSDDMDGLRKVPSNIPNPEMVAGYMDMPLTSIPDPFGECESYGHYMNAKLRSFLDKFGFEYEFYSSTEMYKAGMFDEMLIRVLEKYDEIMELMLPTFREERKATYSPFMPICPKTGKVLQVPIHKWDAKLGTITYKDENGETIEVPVTKGHCKLQWKPDFSMRWAALKVDYEMYGKDHLANGRLYSEICRILGGKPPVQLCYELFLDENGEKISKSKGNSISVDDWLKYAPVESMALFMYQNPTRAKRLFFDVIPKNVDEYITFNQKYHLEEDRTKRFANPVYHIHHGNVPKIETFGITYSLLLNLTSVCNPSDKSVLWGFISRYEPKAMPNNSPYLDHLAEFAIRYYNDFVKAHKSYLAPSEKHKAILQDILDMLKGLPEQIEAESIQKGIYDIGMKAGYENLRDYFKDLYQILLGQSDGPRLGTFIKLYGISETMKLIEEKL.

A 'HIGH' region motif is present at residues 44-52; sequence PSGLPHIGT. A 'KMSKS' region motif is present at residues 290 to 294; that stretch reads KISKS. Residue Lys293 coordinates ATP.

This sequence belongs to the class-I aminoacyl-tRNA synthetase family.

The protein resides in the cytoplasm. It catalyses the reaction tRNA(Lys) + L-lysine + ATP = L-lysyl-tRNA(Lys) + AMP + diphosphate. The sequence is that of Lysine--tRNA ligase from Rickettsia bellii (strain OSU 85-389).